The sequence spans 597 residues: uncharacterized protein (597 aa).

2 disordered regions span residues 165-197 (NSRA…IFSK) and 278-344 (ERSS…RGTL). A compositionally biased stretch (pro residues) spans 169 to 178 (VPPPAPPNPP). Positions 179–189 (KMEKHMSHDTS) are enriched in basic and acidic residues. Residues 293 to 313 (STEVSITSSSPSPSSSSSTST) are compositionally biased toward low complexity. The region spanning 402 to 465 (WSLDDVLLWL…LDDLSKIIEN (64 aa)) is the SAM domain. A disordered region spans residues 576-597 (EESQQKESSSSGISSSPQTPTE). Residues 581–597 (KESSSSGISSSPQTPTE) are compositionally biased toward low complexity.

This is an uncharacterized protein from Caenorhabditis elegans.